The chain runs to 192 residues: Cytidylate kinase (192 aa).

Residue 7–15 participates in ATP binding; it reads GPPGSGKST.

Belongs to the cytidylate kinase family. Type 2 subfamily.

The protein localises to the cytoplasm. The enzyme catalyses CMP + ATP = CDP + ADP. It catalyses the reaction dCMP + ATP = dCDP + ADP. The polypeptide is Cytidylate kinase (Halorubrum lacusprofundi (strain ATCC 49239 / DSM 5036 / JCM 8891 / ACAM 34)).